The primary structure comprises 285 residues: RNA polymerase sigma factor RpoH (285 aa).

The segment at 53 to 122 is sigma-70 factor domain-2; the sequence is LILSHLRFVI…IHEYVLRNWR (70 aa). The Interaction with polymerase core subunit RpoC signature appears at 77–80; it reads DLIQ. Positions 229-281 are sigma-70 factor domain-4; sequence ALLRLDERSRNIIRARWLDKKEKNTLQKIANNYGISAERVRQLEKNAMKKLKI. Residues 254–273 constitute a DNA-binding region (H-T-H motif); it reads LQKIANNYGISAERVRQLEK.

This sequence belongs to the sigma-70 factor family. RpoH subfamily. In terms of assembly, interacts with the RNA polymerase core enzyme.

The protein resides in the cytoplasm. Functionally, sigma factors are initiation factors that promote the attachment of RNA polymerase to specific initiation sites and are then released. This sigma factor is involved in regulation of expression of heat shock genes. The protein is RNA polymerase sigma factor RpoH of Buchnera aphidicola subsp. Schizaphis graminum (strain Sg).